A 255-amino-acid chain; its full sequence is RNA polymerase sigma-F factor (255 aa).

The Polymerase core binding motif lies at 61–74 (DLFQIGCIGLLKSV). A DNA-binding region (H-T-H motif) is located at residues 221–240 (QSEVADRLGISQVQVSRLEK).

Belongs to the sigma-70 factor family.

Functionally, sigma factors are initiation factors that promote the attachment of RNA polymerase to specific initiation sites and are then released. This sigma factor is responsible for the expression of sporulation specific genes. This Bacillus licheniformis protein is RNA polymerase sigma-F factor (sigF).